The sequence spans 470 residues: Aminodeoxychorismate synthase component 1 (470 aa).

Belongs to the anthranilate synthase component I family. As to quaternary structure, monomer. Heterodimer consisting of two non-identical subunits: a glutamine amidotransferase subunit (PabA) and a aminodeoxychorismate synthase subunit (PabB). Mg(2+) is required as a cofactor.

It catalyses the reaction chorismate + L-glutamine = 4-amino-4-deoxychorismate + L-glutamate. The protein operates within cofactor biosynthesis; tetrahydrofolate biosynthesis; 4-aminobenzoate from chorismate: step 1/2. Its function is as follows. Part of a heterodimeric complex that catalyzes the two-step biosynthesis of 4-amino-4-deoxychorismate (ADC), a precursor of p-aminobenzoate (PABA) and tetrahydrofolate. In the first step, a glutamine amidotransferase (PabA) generates ammonia as a substrate that, along with chorismate, is used in the second step, catalyzed by aminodeoxychorismate synthase (PabB) to produce ADC. The chain is Aminodeoxychorismate synthase component 1 (pabB) from Lactococcus lactis subsp. lactis (Streptococcus lactis).